The sequence spans 183 residues: Isopentenyl-diphosphate Delta-isomerase (183 aa).

Mn(2+) is bound by residues H26 and H33. Residues 31–169 (PLHFAFSCYV…PFAFSPWMVE (139 aa)) enclose the Nudix hydrolase domain. The active site involves C68. C68 contacts Mg(2+). Residue H70 coordinates Mn(2+). Position 88 (E88) interacts with Mg(2+). Positions 118 and 120 each coordinate Mn(2+). E120 is a catalytic residue.

This sequence belongs to the IPP isomerase type 1 family. Requires Mg(2+) as cofactor. Mn(2+) is required as a cofactor.

The protein localises to the cytoplasm. It carries out the reaction isopentenyl diphosphate = dimethylallyl diphosphate. It functions in the pathway isoprenoid biosynthesis; dimethylallyl diphosphate biosynthesis; dimethylallyl diphosphate from isopentenyl diphosphate: step 1/1. Catalyzes the 1,3-allylic rearrangement of the homoallylic substrate isopentenyl (IPP) to its highly electrophilic allylic isomer, dimethylallyl diphosphate (DMAPP). This chain is Isopentenyl-diphosphate Delta-isomerase, found in Corynebacterium diphtheriae (strain ATCC 700971 / NCTC 13129 / Biotype gravis).